The chain runs to 189 residues: Elongation factor P (189 aa).

It belongs to the elongation factor P family.

It is found in the cytoplasm. Its pathway is protein biosynthesis; polypeptide chain elongation. Its function is as follows. Involved in peptide bond synthesis. Stimulates efficient translation and peptide-bond synthesis on native or reconstituted 70S ribosomes in vitro. Probably functions indirectly by altering the affinity of the ribosome for aminoacyl-tRNA, thus increasing their reactivity as acceptors for peptidyl transferase. The polypeptide is Elongation factor P (Rhizobium rhizogenes (strain K84 / ATCC BAA-868) (Agrobacterium radiobacter)).